Reading from the N-terminus, the 741-residue chain is Pentatricopeptide repeat-containing protein At1g05670, mitochondrial (741 aa).

Residues 1–21 (MKKPFTGLLMKRGTLSSFRNF) constitute a mitochondrion transit peptide. PPR repeat units lie at residues 174 to 208 (DPRVFDVFFQVLVDFGLLREARRVFEKMLNYGLVL), 209 to 244 (SVDSCNVYLTRLSKDCYKTATAIIVFREFPEVGVCW), 245 to 279 (NVASYNIVIHFVCQLGRIKEAHHLLLLMELKGYTP), 280 to 314 (DVISYSTVVNGYCRFGELDKVWKLIEVMKRKGLKP), 315 to 349 (NSYIYGSIIGLLCRICKLAEAEEAFSEMIRQGILP), 350 to 384 (DTVVYTTLIDGFCKRGDIRAASKFFYEMHSRDITP), 385 to 419 (DVLTYTAIISGFCQIGDMVEAGKLFHEMFCKGLEP), 420 to 454 (DSVTFTELINGYCKAGHMKDAFRVHNHMIQAGCSP), 455 to 489 (NVVTYTTLIDGLCKEGDLDSANELLHEMWKIGLQP), 490 to 524 (NIFTYNSIVNGLCKSGNIEEAVKLVGEFEAAGLNA), 525 to 559 (DTVTYTTLMDAYCKSGEMDKAQEILKEMLGKGLQP), 560 to 594 (TIVTFNVLMNGFCLHGMLEDGEKLLNWMLAKGIAP), 595 to 629 (NATTFNSLVKQYCIRNNLKAATAIYKDMCSRGVGP), 630 to 664 (DGKTYENLVKGHCKARNMKEAWFLFQEMKGKGFSV), and 665 to 699 (SVSTYSVLIKGFLKRKKFLEAREVFDQMRREGLAA).

It belongs to the PPR family. P subfamily.

It localises to the mitochondrion. The chain is Pentatricopeptide repeat-containing protein At1g05670, mitochondrial from Arabidopsis thaliana (Mouse-ear cress).